A 194-amino-acid chain; its full sequence is Peptidyl-tRNA hydrolase (194 aa).

Position 17 (Tyr17) interacts with tRNA. The Proton acceptor role is filled by His22. TRNA-binding residues include Phe68, Asn70, and Asn116.

The protein belongs to the PTH family. Monomer.

The protein resides in the cytoplasm. It carries out the reaction an N-acyl-L-alpha-aminoacyl-tRNA + H2O = an N-acyl-L-amino acid + a tRNA + H(+). Its function is as follows. Hydrolyzes ribosome-free peptidyl-tRNAs (with 1 or more amino acids incorporated), which drop off the ribosome during protein synthesis, or as a result of ribosome stalling. Catalyzes the release of premature peptidyl moieties from peptidyl-tRNA molecules trapped in stalled 50S ribosomal subunits, and thus maintains levels of free tRNAs and 50S ribosomes. This is Peptidyl-tRNA hydrolase from Actinobacillus pleuropneumoniae serotype 5b (strain L20).